The primary structure comprises 358 residues: Heme A synthase 1 (358 aa).

5 helical membrane passes run 11–31 (LVGTWLLVICFMIFGMVVGGG), 98–117 (WGRLMAVVFLVPLAVFRLRG), 123–143 (LTAWLLFLFGLGAGEATMGWY), 159–179 (LYLGPHFVLAMLIFTAMLWTA), and 199–219 (LLSVSIGLIIATIGLGALVAA). His262 contacts heme. The next 3 membrane-spanning stretches (helical) occupy residues 264–284 (VAATVTAIVVVIAAAMGLRAP), 292–312 (LFLLLAGLVSLQYILGMSTLV), and 315–335 (MAELGYVHELNAVLLLAACIA). Heme is bound at residue His322.

Belongs to the COX15/CtaA family. Type 2 subfamily. As to quaternary structure, interacts with CtaB. It depends on heme b as a cofactor.

It is found in the cell membrane. The enzyme catalyses Fe(II)-heme o + 2 A + H2O = Fe(II)-heme a + 2 AH2. The protein operates within porphyrin-containing compound metabolism; heme A biosynthesis; heme A from heme O: step 1/1. Functionally, catalyzes the conversion of heme O to heme A by two successive hydroxylations of the methyl group at C8. The first hydroxylation forms heme I, the second hydroxylation results in an unstable dihydroxymethyl group, which spontaneously dehydrates, resulting in the formyl group of heme A. The chain is Heme A synthase 1 from Acidiphilium cryptum (strain JF-5).